The primary structure comprises 63 residues: Alpha-conotoxin-like PuSG1.1 (63 aa).

The first 21 residues, 1-21 (MRCLAFLVVTLLLFTATATTG), serve as a signal peptide directing secretion. Residues 22–43 (ASNGMNAAASGEAPDSISLAVR) constitute a propeptide that is removed on maturation. Intrachain disulfides connect C46-C52 and C47-C60. The lacks the Ser-Xaa-Pro motif that is crucial for potent interaction with nAChR stretch occupies residues 48–50 (PDP).

This sequence belongs to the conotoxin A superfamily. As to expression, expressed by the salivary gland.

The protein localises to the secreted. Its function is as follows. Alpha-conopeptides-like may act on postsynaptic membranes, they bind to the nicotinic acetylcholine receptors (nAChR) and thus inhibit them. Has possibly a distinct nAChR binding mode from other alpha-conotoxins, due to a different three residue motif (lacks the Ser-Xaa-Pro motif). The sequence is that of Alpha-conotoxin-like PuSG1.1 from Conus pulicarius (Flea-bitten cone).